We begin with the raw amino-acid sequence, 59 residues long: Ribosome modulation factor (59 aa).

Belongs to the ribosome modulation factor family.

The protein localises to the cytoplasm. Functionally, during stationary phase, converts 70S ribosomes to an inactive dimeric form (100S ribosomes). The polypeptide is Ribosome modulation factor (Aeromonas veronii (strain B565)).